Reading from the N-terminus, the 346-residue chain is Quinolinate synthase (346 aa).

Iminosuccinate is bound by residues His47 and Ser68. Cys113 contributes to the [4Fe-4S] cluster binding site. Iminosuccinate contacts are provided by residues 139–141 and Ser156; that span reads YAN. Cys200 serves as a coordination point for [4Fe-4S] cluster. Residues 226 to 228 and Thr243 each bind iminosuccinate; that span reads HPE. Residue Cys297 participates in [4Fe-4S] cluster binding.

The protein belongs to the quinolinate synthase family. Type 1 subfamily. It depends on [4Fe-4S] cluster as a cofactor.

Its subcellular location is the cytoplasm. The catalysed reaction is iminosuccinate + dihydroxyacetone phosphate = quinolinate + phosphate + 2 H2O + H(+). It functions in the pathway cofactor biosynthesis; NAD(+) biosynthesis; quinolinate from iminoaspartate: step 1/1. Catalyzes the condensation of iminoaspartate with dihydroxyacetone phosphate to form quinolinate. The protein is Quinolinate synthase of Pseudoalteromonas translucida (strain TAC 125).